The sequence spans 953 residues: MIEGISFASFVTHEKPKFVRALDFYKALGFLPTKEYKHGTDHHATDEEGAGSIQEVWLTSSRAGVPSVTVKLRLSRHGNEHVSLPNLKHDWRSLVPSLVYYAPDLDAVRAAITPFLHEDHSTLLERPSHTNFIELYAIDPMGNLVGFSRRENPYSSAMQKPFSADDIGPQNFSKPNETKIKGKKRIGVMTSGGDAPGMCAAVRAVVRAGIARGCEVYAVREGYEGLVKGGDLIEPLSWEDVRGWLSLGGTLIGTARCKEFREREGRLAGALNMVKNGIDALIVIGGDGSLTGADLFREEWPSLIEELVTNGSITAEQAERHRHLDICGMVGSIDNDMATTDVTIGAYSSLDRICELVDFIDATAQSHSRAFVVEVMGRHCGWLALMAGTATGADYIFIPEAAPDATQWAEKMTRVVKRHRSQGKRKTVVIVAEGAIDSDLNPITAKMVKDVLDGIGLDTRISTLGHVQRGGPPVAADRVLASLQGVEAIDAILSLTPETPSPMIALNENKITRKPLVESVALTKKVADAIGNKDFAEAMRLRNPEFVEQLQGFLLTNSADKDRPQEPAKDPLRVAIVCTGAPAGGMNAAIRSAVLYGLARGHQMFAIHNGWSGLVKNGDDAVRELTWLEVEPLCQKGGCEIGTNRSLPECDLGMIAYHFQRQRFDGLIVIGGFEAFRALNQLDDARHAYPALRIPMVGIPATISNNVPGTDYSLGADTCLNSLVQYCDVLKTSASATRLRLFVVEVQGGNSGYIATVAGLITGAYVVYTPESGINLRLLQHDISYLKDTFAHQADVNRTGKLLLRNERSSNVFTTDVITGIINEEAKGSFDARTAIPGHVQQGGHPSPTDRVRAQRFAIKAVQFIEEHHGSKNNADHCVILGVRGSKFKYTSVSHLYAHKTEHGARRPKHSYWHAIGDIANMLVGRKAPPLPETLNDEIEKNIAKEQGIIDPC.

The tract at residues 1–558 (MIEGISFASF…QLQGFLLTNS (558 aa)) is N-terminal catalytic PFK domain 1. Residues glycine 193, 256–257 (RC), and 286–289 (GDGS) each bind ATP. Aspartate 287 contacts Mg(2+). Residues 332-334 (SID), arginine 369, 376-378 (MGR), glutamate 433, arginine 460, and 466-469 (HVQR) contribute to the substrate site. Aspartate 334 (proton acceptor) is an active-site residue. The interdomain linker stretch occupies residues 559–572 (ADKDRPQEPAKDPL). Positions 573 to 953 (RVAIVCTGAP…AKEQGIIDPC (381 aa)) are C-terminal regulatory PFK domain 2. Beta-D-fructose 2,6-bisphosphate contacts are provided by residues arginine 645, 702-706 (TISNN), arginine 740, 747-749 (QGG), glutamate 807, arginine 833, 839-842 (HVQQ), and arginine 906.

Belongs to the phosphofructokinase type A (PFKA) family. ATP-dependent PFK group I subfamily. Eukaryotic two domain clade 'E' sub-subfamily. In terms of assembly, heterooctamer of 4 alpha and 4 beta chains. It depends on Mg(2+) as a cofactor.

It is found in the cytoplasm. The catalysed reaction is beta-D-fructose 6-phosphate + ATP = beta-D-fructose 1,6-bisphosphate + ADP + H(+). The protein operates within carbohydrate degradation; glycolysis; D-glyceraldehyde 3-phosphate and glycerone phosphate from D-glucose: step 3/4. With respect to regulation, allosterically activated by ADP, AMP, or fructose 2,6-bisphosphate, and allosterically inhibited by ATP or citrate. Its function is as follows. Catalyzes the phosphorylation of D-fructose 6-phosphate to fructose 1,6-bisphosphate by ATP, the first committing step of glycolysis. This is ATP-dependent 6-phosphofructokinase (PFK1) from Yarrowia lipolytica (strain CLIB 122 / E 150) (Yeast).